Reading from the N-terminus, the 523-residue chain is Nondiscriminating glutamyl-tRNA synthetase EARS2, mitochondrial (523 aa).

The transit peptide at 1–41 directs the protein to the mitochondrion; sequence MAALLRRLLQRERPSAASGRPVGRREANLGTDAGVAVRVRF. 40–42 lines the L-glutamate pocket; it reads RFA. The 'HIGH' region signature appears at 45-53; sequence PTGFLHLGG. H50 serves as a coordination point for ATP. L-glutamate is bound by residues E76, 228-232, and R246; that span reads YHLAC. E249 lines the ATP pocket. K256 bears the N6-succinyllysine mark. 284-288 lines the ATP pocket; it reads KLSKR. Residues 284–288 carry the 'KMSKS' region motif; it reads KLSKR. Position 486 is an N6-acetyllysine (K486).

Belongs to the class-I aminoacyl-tRNA synthetase family. Glutamate--tRNA ligase type 1 subfamily.

The protein resides in the mitochondrion matrix. It catalyses the reaction tRNA(Glx) + L-glutamate + ATP = L-glutamyl-tRNA(Glx) + AMP + diphosphate. The catalysed reaction is tRNA(Glu) + L-glutamate + ATP = L-glutamyl-tRNA(Glu) + AMP + diphosphate. The enzyme catalyses tRNA(Gln) + L-glutamate + ATP = L-glutamyl-tRNA(Gln) + AMP + diphosphate. Functionally, non-discriminating glutamyl-tRNA synthetase that catalyzes aminoacylation of both mitochondrial tRNA(Glu) and tRNA(Gln) and participates in RNA aminoacylation for mitochondrial protein translation. Attachs glutamate to tRNA(Glu) or tRNA(Gln) in a two-step reaction: glutamate is first activated by ATP to form Glu-AMP and then transferred to the acceptor end of tRNA(Glu) or tRNA(Gln). In vitro, cytoplasmic tRNA(Gln) is slightly glutamylated, but with low activity. The chain is Nondiscriminating glutamyl-tRNA synthetase EARS2, mitochondrial from Homo sapiens (Human).